The following is a 123-amino-acid chain: T-complex protein 1 subunit alpha (123 aa).

Gly-68 provides a ligand contact to ADP.

The protein belongs to the TCP-1 chaperonin family. As to quaternary structure, component of the chaperonin-containing T-complex (TRiC), a hexadecamer composed of two identical back-to-back stacked rings enclosing a protein folding chamber. Each ring is made up of eight different subunits: TCP1/CCT1, CCT2, CCT3, CCT4, CCT5, CCT6A/CCT6, CCT7, CCT8. Interacts with PACRG. Interacts with GBA1. Interacts with DLEC1.

The protein localises to the cytoplasm. It localises to the cytosol. The protein resides in the cytoskeleton. It is found in the microtubule organizing center. Its subcellular location is the centrosome. It carries out the reaction ATP + H2O = ADP + phosphate + H(+). In terms of biological role, component of the chaperonin-containing T-complex (TRiC), a molecular chaperone complex that assists the folding of actin, tubulin and other proteins upon ATP hydrolysis. The TRiC complex mediates the folding of WRAP53/TCAB1, thereby regulating telomere maintenance. As part of the TRiC complex may play a role in the assembly of BBSome, a complex involved in ciliogenesis regulating transports vesicles to the cilia. This is T-complex protein 1 subunit alpha from Mesocricetus auratus (Golden hamster).